The chain runs to 99 residues: Cell division protein FtsB (99 aa).

Topologically, residues 1–3 (MKF) are cytoplasmic. The chain crosses the membrane as a helical span at residues 4-21 (FVITLIVLLGLLQYRLWS). At 22–99 (GDNSLPEYFV…GDRAVSSPSQ (78 aa)) the chain is on the periplasmic side. The stretch at 31–73 (VLQKQIAAQQDGNAKLNERNQVLKEEIIDLKSGTEAIEERARN) forms a coiled coil.

This sequence belongs to the FtsB family. As to quaternary structure, part of a complex composed of FtsB, FtsL and FtsQ.

Its subcellular location is the cell inner membrane. Essential cell division protein. May link together the upstream cell division proteins, which are predominantly cytoplasmic, with the downstream cell division proteins, which are predominantly periplasmic. This chain is Cell division protein FtsB, found in Shewanella oneidensis (strain ATCC 700550 / JCM 31522 / CIP 106686 / LMG 19005 / NCIMB 14063 / MR-1).